A 507-amino-acid chain; its full sequence is MITLTPGHLTLPQLRRIARESVQLQLDPASFAKIDAGAKAVADIAAKGEPAYGINTGFGRLASTHIPHDQLELLQKNLVLSHAVGVGEPMARSSVRLLMALKLSSLGRGHSGIRREVMDALITLFNADVLPLIPVKGSVGASGDLAPLAHMSAVLLGVGEVFIRGERASALDGLRVAGLAPLTLQAKEGLALLNGTQASTALALDNMFAIEDLYRTALVAGALSVDAAAGSVKPFDARIHELRGHRGQIDAAASYRELLEGSPINQSHRDCDKVQDPYSLRCQPQVMGACLDQMRHAADVLLVEANAVSDNPLIFPDTGEVLSGGNFHAEPVAFAADNLALAAAEIGALAERRIALLIDATLSGLPPFLVRDGGVNSGFMIAHVTAAALASENKTLAHPASVDSLPTSANQEDHVSMATFAARKLADIADNTKHILAIELLAAAQGVDLRAPHHTSPKLAPVMETIRSKVAHYELDHYFAPDIAVIAQLVGERAFAKIAPFSFASEQ.

The segment at residues 141–143 (ASG) is a cross-link (5-imidazolinone (Ala-Gly)). A 2,3-didehydroalanine (Ser) modification is found at Ser142.

Belongs to the PAL/histidase family. Contains an active site 4-methylidene-imidazol-5-one (MIO), which is formed autocatalytically by cyclization and dehydration of residues Ala-Ser-Gly.

It is found in the cytoplasm. The enzyme catalyses L-histidine = trans-urocanate + NH4(+). It participates in amino-acid degradation; L-histidine degradation into L-glutamate; N-formimidoyl-L-glutamate from L-histidine: step 1/3. This Burkholderia vietnamiensis (strain G4 / LMG 22486) (Burkholderia cepacia (strain R1808)) protein is Histidine ammonia-lyase.